Consider the following 75-residue polypeptide: Protein TM_1420 (75 aa).

[2Fe-2S] cluster contacts are provided by C6, C11, C39, and C43.

The cofactor is [2Fe-2S] cluster.

In terms of biological role, might be part of a multi-protein complex, possibly involved in metal cluster assembly. The chain is Protein TM_1420 from Thermotoga maritima (strain ATCC 43589 / DSM 3109 / JCM 10099 / NBRC 100826 / MSB8).